The primary structure comprises 300 residues: Cation-efflux pump FieF (300 aa).

Helical transmembrane passes span 12–32 (AALSATALASILLIIKIFAWW), 40–60 (LAALVDSLVDLAASLTNLFVV), 82–102 (AALAQSMFISGSALFLFLTGF), and 114–134 (PSIGIGVTLVALFSTLILVTF). Asp45 and Asp49 together coordinate Zn(2+). Positions 153 and 157 each coordinate Zn(2+). The next 2 membrane-spanning stretches (helical) occupy residues 155-175 (QSDVLMNGAILIALALSWYGF) and 178-198 (ADALFALGIGVYILYSALRMG).

It belongs to the cation diffusion facilitator (CDF) transporter (TC 2.A.4) family. FieF subfamily. Homodimer.

It is found in the cell inner membrane. It carries out the reaction Zn(2+)(in) + H(+)(out) = Zn(2+)(out) + H(+)(in). The catalysed reaction is Cd(2+)(in) + H(+)(out) = Cd(2+)(out) + H(+)(in). The enzyme catalyses Fe(2+)(in) + H(+)(out) = Fe(2+)(out) + H(+)(in). Its function is as follows. Divalent metal cation transporter which exports Zn(2+), Cd(2+) and possibly Fe(2+). May be involved in zinc and iron detoxification by efflux. This is Cation-efflux pump FieF from Yersinia pestis bv. Antiqua (strain Antiqua).